A 313-amino-acid chain; its full sequence is tRNA dimethylallyltransferase (313 aa).

14 to 21 (GPTASGKT) serves as a coordination point for ATP. 16 to 21 (TASGKT) serves as a coordination point for substrate. 2 interaction with substrate tRNA regions span residues 39 to 42 (DSAL) and 163 to 167 (QRIGR).

Belongs to the IPP transferase family. In terms of assembly, monomer. Mg(2+) is required as a cofactor.

The enzyme catalyses adenosine(37) in tRNA + dimethylallyl diphosphate = N(6)-dimethylallyladenosine(37) in tRNA + diphosphate. Functionally, catalyzes the transfer of a dimethylallyl group onto the adenine at position 37 in tRNAs that read codons beginning with uridine, leading to the formation of N6-(dimethylallyl)adenosine (i(6)A). The protein is tRNA dimethylallyltransferase of Thiobacillus denitrificans (strain ATCC 25259 / T1).